A 468-amino-acid polypeptide reads, in one-letter code: ATP synthase subunit beta (468 aa).

148 to 155 (GGAGVGKT) lines the ATP pocket.

Belongs to the ATPase alpha/beta chains family. In terms of assembly, F-type ATPases have 2 components, CF(1) - the catalytic core - and CF(0) - the membrane proton channel. CF(1) has five subunits: alpha(3), beta(3), gamma(1), delta(1), epsilon(1). CF(0) has three main subunits: a(1), b(2) and c(9-12). The alpha and beta chains form an alternating ring which encloses part of the gamma chain. CF(1) is attached to CF(0) by a central stalk formed by the gamma and epsilon chains, while a peripheral stalk is formed by the delta and b chains.

Its subcellular location is the cell inner membrane. The catalysed reaction is ATP + H2O + 4 H(+)(in) = ADP + phosphate + 5 H(+)(out). In terms of biological role, produces ATP from ADP in the presence of a proton gradient across the membrane. The catalytic sites are hosted primarily by the beta subunits. The chain is ATP synthase subunit beta from Xanthomonas euvesicatoria pv. vesicatoria (strain 85-10) (Xanthomonas campestris pv. vesicatoria).